A 345-amino-acid chain; its full sequence is Probable S-adenosylmethionine carrier 2, chloroplastic (345 aa).

The N-terminal 31 residues, 1-31 (MTKALSGFCCSLSLSTLVRSSSSHMDSDIVS), are a transit peptide targeting the chloroplast. Solcar repeat units lie at residues 76–148 (RVLY…TKQK), 157–239 (LSAV…LRIG), and 252–334 (ENAM…TKQI). The next 5 membrane-spanning stretches (helical) occupy residues 82-102 (LITGGLAGVVVEAALYPIDTI), 121-141 (YSGLGGNLVGVLPASALFFGV), 156-176 (NLSAVAHLAAGALGGAVSSIV), 254-274 (AMIGAFAGAVTGVLTTPLDVI), and 309-329 (GMGPRVLWIGIGGSIFFGVLE).

The protein belongs to the mitochondrial carrier (TC 2.A.29) family. Expressed at low levels in seedlings, leaves, flowers, stems and roots.

It is found in the plastid. The protein localises to the chloroplast membrane. Its function is as follows. Probable S-adenosylmethionine (SAM) transporter able to catalyze both uniport and exchange reactions through membranes. This Arabidopsis thaliana (Mouse-ear cress) protein is Probable S-adenosylmethionine carrier 2, chloroplastic (SAMC2).